The following is a 261-amino-acid chain: Probable glutathione-independent glyoxalase hsp3103 (261 aa).

Catalysis depends on residues C162, H163, and E196.

This sequence belongs to the peptidase C56 family. HSP31-like subfamily.

It catalyses the reaction methylglyoxal + H2O = (R)-lactate + H(+). Its function is as follows. Catalyzes the conversion of methylglyoxal (MG) to D-lactate in a single glutathione (GSH)-independent step. May play a role in detoxifying endogenously produced glyoxals. Involved in protection against reactive oxygen species (ROS). In Schizosaccharomyces pombe (strain 972 / ATCC 24843) (Fission yeast), this protein is Probable glutathione-independent glyoxalase hsp3103.